The sequence spans 245 residues: tRNA pseudouridine synthase A (245 aa).

Aspartate 52 (nucleophile) is an active-site residue. Residue tyrosine 111 participates in substrate binding.

This sequence belongs to the tRNA pseudouridine synthase TruA family. In terms of assembly, homodimer.

The enzyme catalyses uridine(38/39/40) in tRNA = pseudouridine(38/39/40) in tRNA. Formation of pseudouridine at positions 38, 39 and 40 in the anticodon stem and loop of transfer RNAs. The polypeptide is tRNA pseudouridine synthase A (Rhodopseudomonas palustris (strain HaA2)).